A 131-amino-acid polypeptide reads, in one-letter code: uncharacterized protein (131 aa).

This is an uncharacterized protein from Rickettsia conorii (strain ATCC VR-613 / Malish 7).